A 332-amino-acid chain; its full sequence is MKLFRILDPFTLTLITVVLLASFFPARGDFVPFFENLTTAAIALLFFMHGAKLSREAIIAGGGHWRLHLWVMCSTFVLFPILGVLFAWWKPVNVDPMLYSGFLYLCILPATVQSAIAFTSMAGGNVAAAVCSASASSLLGIFLSPLLVGLVMNVHGAGGSLEQVGKIMLQLLLPFVLGHLSRPWIGDWVSRNKKWIAKTDQTSILLVVYTAFSEAVVNGIWHKVGWGSLLFIVVVSCVLLAIVIVVNVFMARRLSFNKADEITIVFCGSKKSLANGIPMANILFPTSVIGMMVLPLMIFHQIQLMVCAVLARRYKRQTEQLQAQQESSADKA.

It belongs to the bile acid:sodium symporter (BASS) (TC 2.A.28) family.

The chain is Putative symporter YfeH (yfeH) from Escherichia coli (strain K12).